An 85-amino-acid chain; its full sequence is MNYLVMISLALLFVTGVESVKDGYIVDDVNCTYFCGRNAYCNEECTKLKGESGYCQWASPYGNACYCYKLPDHVRTKGPGRCHGR.

A signal peptide spans 1-19; sequence MNYLVMISLALLFVTGVES. The 63-residue stretch at 21–83 folds into the LCN-type CS-alpha/beta domain; sequence KDGYIVDDVN…VRTKGPGRCH (63 aa). 4 cysteine pairs are disulfide-bonded: Cys-31/Cys-82, Cys-35/Cys-55, Cys-41/Cys-65, and Cys-45/Cys-67. Histidine amide is present on His-83.

The protein belongs to the long (4 C-C) scorpion toxin superfamily. Sodium channel inhibitor family. Alpha subfamily. Post-translationally, the amidation of His-83 is not necessary for toxicity. As to expression, expressed by the venom gland.

The protein resides in the secreted. Functionally, alpha toxin that binds voltage-independently at site-3 of sodium channels (Nav), inhibits the inactivation of the activated channels, and weakly inhibits activation, thereby blocking neuronal transmission. Inserts into voltage-sensing domain IV to stabilize a deactivated state, thereby preventing fast-inactivation. Principally slows the inactivation process of TTX-sensitive sodium channels. It is active on mammalian brain Nav1.2/SCN2A (EC(50)human=0.72 nM, EC(50)rat=2.6 nM), on rat skeletal muscle Nav1.4/SCN4A (EC(50)=2.2 nM), and on human neuronal Nav1.7/SCN9A (EC(50)=6.8-51.7 nM). In vivo, intraplantar injection into mice induces spontaneous pain responses. In Androctonus australis (Sahara scorpion), this protein is Alpha-mammal toxin AaH2.